A 156-amino-acid polypeptide reads, in one-letter code: ATP synthase subunit b (156 aa).

A helical membrane pass occupies residues 7-27 (LIGQTVAFIIFVWFCMKFVWP).

Belongs to the ATPase B chain family. As to quaternary structure, F-type ATPases have 2 components, F(1) - the catalytic core - and F(0) - the membrane proton channel. F(1) has five subunits: alpha(3), beta(3), gamma(1), delta(1), epsilon(1). F(0) has three main subunits: a(1), b(2) and c(10-14). The alpha and beta chains form an alternating ring which encloses part of the gamma chain. F(1) is attached to F(0) by a central stalk formed by the gamma and epsilon chains, while a peripheral stalk is formed by the delta and b chains.

It is found in the cell inner membrane. Functionally, f(1)F(0) ATP synthase produces ATP from ADP in the presence of a proton or sodium gradient. F-type ATPases consist of two structural domains, F(1) containing the extramembraneous catalytic core and F(0) containing the membrane proton channel, linked together by a central stalk and a peripheral stalk. During catalysis, ATP synthesis in the catalytic domain of F(1) is coupled via a rotary mechanism of the central stalk subunits to proton translocation. In terms of biological role, component of the F(0) channel, it forms part of the peripheral stalk, linking F(1) to F(0). The sequence is that of ATP synthase subunit b from Shewanella oneidensis (strain ATCC 700550 / JCM 31522 / CIP 106686 / LMG 19005 / NCIMB 14063 / MR-1).